The sequence spans 101 residues: Urease subunit beta (101 aa).

It belongs to the urease beta subunit family. As to quaternary structure, heterotrimer of UreA (gamma), UreB (beta) and UreC (alpha) subunits. Three heterotrimers associate to form the active enzyme.

The protein localises to the cytoplasm. It carries out the reaction urea + 2 H2O + H(+) = hydrogencarbonate + 2 NH4(+). It participates in nitrogen metabolism; urea degradation; CO(2) and NH(3) from urea (urease route): step 1/1. This Ralstonia nicotianae (strain ATCC BAA-1114 / GMI1000) (Ralstonia solanacearum) protein is Urease subunit beta.